A 589-amino-acid chain; its full sequence is ATP-dependent lipid A-core flippase (589 aa).

Transmembrane regions (helical) follow at residues Trp29–Leu49, Ala68–Ile88, Val157–Leu177, Leu254–Ala274, and Leu283–Lys303. The region spanning Val32–Ser314 is the ABC transmembrane type-1 domain. The 237-residue stretch at Ile346 to Met582 folds into the ABC transporter domain. Gly380–Ser387 contacts ATP.

Belongs to the ABC transporter superfamily. Lipid exporter (TC 3.A.1.106) family. As to quaternary structure, homodimer.

The protein localises to the cell inner membrane. The catalysed reaction is ATP + H2O + lipid A-core oligosaccharideSide 1 = ADP + phosphate + lipid A-core oligosaccharideSide 2.. In terms of biological role, involved in lipopolysaccharide (LPS) biosynthesis. Translocates lipid A-core from the inner to the outer leaflet of the inner membrane. Transmembrane domains (TMD) form a pore in the inner membrane and the ATP-binding domain (NBD) is responsible for energy generation. The protein is ATP-dependent lipid A-core flippase of Xylella fastidiosa (strain 9a5c).